Reading from the N-terminus, the 108-residue chain is Phosphoribosyl-ATP pyrophosphatase (108 aa).

Belongs to the PRA-PH family.

Its subcellular location is the cytoplasm. The catalysed reaction is 1-(5-phospho-beta-D-ribosyl)-ATP + H2O = 1-(5-phospho-beta-D-ribosyl)-5'-AMP + diphosphate + H(+). The protein operates within amino-acid biosynthesis; L-histidine biosynthesis; L-histidine from 5-phospho-alpha-D-ribose 1-diphosphate: step 2/9. This Geobacter sulfurreducens (strain ATCC 51573 / DSM 12127 / PCA) protein is Phosphoribosyl-ATP pyrophosphatase.